The sequence spans 264 residues: Acyl-[acyl-carrier-protein]--UDP-N-acetylglucosamine O-acyltransferase (264 aa).

This sequence belongs to the transferase hexapeptide repeat family. LpxA subfamily. Homotrimer.

Its subcellular location is the cytoplasm. The catalysed reaction is a (3R)-hydroxyacyl-[ACP] + UDP-N-acetyl-alpha-D-glucosamine = a UDP-3-O-[(3R)-3-hydroxyacyl]-N-acetyl-alpha-D-glucosamine + holo-[ACP]. It functions in the pathway glycolipid biosynthesis; lipid IV(A) biosynthesis; lipid IV(A) from (3R)-3-hydroxytetradecanoyl-[acyl-carrier-protein] and UDP-N-acetyl-alpha-D-glucosamine: step 1/6. In terms of biological role, involved in the biosynthesis of lipid A, a phosphorylated glycolipid that anchors the lipopolysaccharide to the outer membrane of the cell. The protein is Acyl-[acyl-carrier-protein]--UDP-N-acetylglucosamine O-acyltransferase of Rickettsia conorii (strain ATCC VR-613 / Malish 7).